The following is a 363-amino-acid chain: Mitogen-activated protein kinase 4 (363 aa).

Residues 30–318 (YDLVKVVGFG…AKQVMEHPYF (289 aa)) form the Protein kinase domain. ATP contacts are provided by residues 36–44 (VGFGACGTV) and Lys59. Catalysis depends on Asp156, which acts as the Proton acceptor. Phosphoserine occurs at positions 186 and 187. A Phosphothreonine; by MKK5 modification is found at Thr190. Positions 190-192 (TQY) match the TQY motif. Tyr192 is subject to Phosphotyrosine; by MKK5.

Belongs to the protein kinase superfamily. CMGC Ser/Thr protein kinase family. MAP kinase subfamily. Requires Mg(2+) as cofactor. In terms of processing, dually phosphorylated on Thr-190 and Tyr-192, which activates the enzyme.

The catalysed reaction is L-seryl-[protein] + ATP = O-phospho-L-seryl-[protein] + ADP + H(+). It catalyses the reaction L-threonyl-[protein] + ATP = O-phospho-L-threonyl-[protein] + ADP + H(+). Its function is as follows. Essential for the two main proliferating life stages, the promastigotes and amastigotes, of the parasite. The protein is Mitogen-activated protein kinase 4 of Leishmania mexicana.